Consider the following 647-residue polypeptide: Glutamyl-tRNA(Gln) amidotransferase subunit B, mitochondrial (647 aa).

The N-terminal 16 residues, 1 to 16, are a transit peptide targeting the mitochondrion; the sequence is MARNLCRNVQTTPRPL. A disordered region spans residues 39–77; the sequence is PRPRYFGSSTAKSAKKKSNNKAYSGSSMSAGDASAGPSR. A compositionally biased stretch (low complexity) spans 58–76; sequence NKAYSGSSMSAGDASAGPS.

This sequence belongs to the GatB/GatE family. GatB subfamily. As to quaternary structure, subunit of the heterotrimeric GatCAB amidotransferase (AdT) complex, composed of A, B and C subunits.

The protein resides in the mitochondrion. It carries out the reaction L-glutamyl-tRNA(Gln) + L-glutamine + ATP + H2O = L-glutaminyl-tRNA(Gln) + L-glutamate + ADP + phosphate + H(+). Allows the formation of correctly charged Gln-tRNA(Gln) through the transamidation of misacylated Glu-tRNA(Gln) in the mitochondria. The reaction takes place in the presence of glutamine and ATP through an activated gamma-phospho-Glu-tRNA(Gln). This is Glutamyl-tRNA(Gln) amidotransferase subunit B, mitochondrial from Mycosarcoma maydis (Corn smut fungus).